A 190-amino-acid chain; its full sequence is Peptidyl-tRNA hydrolase (190 aa).

Tyr18 provides a ligand contact to tRNA. The Proton acceptor role is filled by His23. Residues Tyr69, Asn71, and Asn117 each contribute to the tRNA site.

This sequence belongs to the PTH family. In terms of assembly, monomer.

The protein localises to the cytoplasm. The catalysed reaction is an N-acyl-L-alpha-aminoacyl-tRNA + H2O = an N-acyl-L-amino acid + a tRNA + H(+). In terms of biological role, hydrolyzes ribosome-free peptidyl-tRNAs (with 1 or more amino acids incorporated), which drop off the ribosome during protein synthesis, or as a result of ribosome stalling. Functionally, catalyzes the release of premature peptidyl moieties from peptidyl-tRNA molecules trapped in stalled 50S ribosomal subunits, and thus maintains levels of free tRNAs and 50S ribosomes. This is Peptidyl-tRNA hydrolase from Rhodococcus erythropolis (strain PR4 / NBRC 100887).